We begin with the raw amino-acid sequence, 65 residues long: DNA-directed RNA polymerase subunit omega (65 aa).

The protein belongs to the RNA polymerase subunit omega family. In terms of assembly, the RNAP catalytic core consists of 2 alpha, 1 beta, 1 beta' and 1 omega subunit. When a sigma factor is associated with the core the holoenzyme is formed, which can initiate transcription.

The catalysed reaction is RNA(n) + a ribonucleoside 5'-triphosphate = RNA(n+1) + diphosphate. Functionally, promotes RNA polymerase assembly. Latches the N- and C-terminal regions of the beta' subunit thereby facilitating its interaction with the beta and alpha subunits. In Finegoldia magna (strain ATCC 29328 / DSM 20472 / WAL 2508) (Peptostreptococcus magnus), this protein is DNA-directed RNA polymerase subunit omega.